The following is a 258-amino-acid chain: Imidazole glycerol phosphate synthase subunit HisF (258 aa).

Active-site residues include D11 and D130.

The protein belongs to the HisA/HisF family. In terms of assembly, heterodimer of HisH and HisF.

Its subcellular location is the cytoplasm. The enzyme catalyses 5-[(5-phospho-1-deoxy-D-ribulos-1-ylimino)methylamino]-1-(5-phospho-beta-D-ribosyl)imidazole-4-carboxamide + L-glutamine = D-erythro-1-(imidazol-4-yl)glycerol 3-phosphate + 5-amino-1-(5-phospho-beta-D-ribosyl)imidazole-4-carboxamide + L-glutamate + H(+). Its pathway is amino-acid biosynthesis; L-histidine biosynthesis; L-histidine from 5-phospho-alpha-D-ribose 1-diphosphate: step 5/9. IGPS catalyzes the conversion of PRFAR and glutamine to IGP, AICAR and glutamate. The HisF subunit catalyzes the cyclization activity that produces IGP and AICAR from PRFAR using the ammonia provided by the HisH subunit. The protein is Imidazole glycerol phosphate synthase subunit HisF of Yersinia pseudotuberculosis serotype O:1b (strain IP 31758).